The sequence spans 197 residues: Beta-crystallin A2 (197 aa).

The N-terminal arm stretch occupies residues 1 to 11 (MSSAPAPGPAP). 2 consecutive Beta/gamma crystallin 'Greek key' domains span residues 12–52 (ASLT…KVEN) and 53–99 (GVWV…RPVL). Residues 100 to 105 (CANHND) are connecting peptide. Beta/gamma crystallin 'Greek key' domains follow at residues 106–147 (SRVT…KVSS) and 148–196 (GAWV…RRVQ).

The protein belongs to the beta/gamma-crystallin family. Homo/heterodimer, or complexes of higher-order. The structure of beta-crystallin oligomers seems to be stabilized through interactions between the N-terminal arms.

In terms of biological role, crystallins are the dominant structural components of the vertebrate eye lens. The polypeptide is Beta-crystallin A2 (CRYBA2) (Homo sapiens (Human)).